The primary structure comprises 381 residues: Peptidoglycan glycosyltransferase MrdB (381 aa).

Transmembrane regions (helical) follow at residues 11–31 (FDLL…LLIF), 40–60 (KQGV…FIPF), 66–86 (WLFV…FMGY), 99–119 (FISI…LLLA), 132–152 (YDWG…ALIL), 156–176 (DLGT…IVGL), 180–200 (VWLP…HFLH), 263–283 (FGFL…LHLF), 297–317 (IVAL…IAMT), and 328–348 (LPLF…FGIL).

This sequence belongs to the SEDS family. MrdB/RodA subfamily.

The protein resides in the cell inner membrane. The enzyme catalyses [GlcNAc-(1-&gt;4)-Mur2Ac(oyl-L-Ala-gamma-D-Glu-L-Lys-D-Ala-D-Ala)](n)-di-trans,octa-cis-undecaprenyl diphosphate + beta-D-GlcNAc-(1-&gt;4)-Mur2Ac(oyl-L-Ala-gamma-D-Glu-L-Lys-D-Ala-D-Ala)-di-trans,octa-cis-undecaprenyl diphosphate = [GlcNAc-(1-&gt;4)-Mur2Ac(oyl-L-Ala-gamma-D-Glu-L-Lys-D-Ala-D-Ala)](n+1)-di-trans,octa-cis-undecaprenyl diphosphate + di-trans,octa-cis-undecaprenyl diphosphate + H(+). It functions in the pathway cell wall biogenesis; peptidoglycan biosynthesis. Its function is as follows. Peptidoglycan polymerase that is essential for cell wall elongation. This is Peptidoglycan glycosyltransferase MrdB from Helicobacter pylori (strain ATCC 700392 / 26695) (Campylobacter pylori).